A 338-amino-acid chain; its full sequence is Adenylosuccinate synthetase (338 aa).

GTP-binding positions include 12-18 (GDEGKGK) and 42-44 (GHT). The active-site Proton acceptor is Asp-13. Asp-13 and Gly-42 together coordinate Mg(2+). IMP-binding positions include 13-16 (DEGK), 40-43 (NAGH), Thr-127, Arg-141, Gln-179, Thr-194, and Arg-256. His-43 (proton donor) is an active-site residue. A substrate-binding site is contributed by 252-258 (TVTGRRR). Residues Arg-258, 284–286 (CLD), and 324–326 (STG) each bind GTP.

This sequence belongs to the adenylosuccinate synthetase family. Homodimer. Mg(2+) serves as cofactor.

It is found in the cytoplasm. The catalysed reaction is IMP + L-aspartate + GTP = N(6)-(1,2-dicarboxyethyl)-AMP + GDP + phosphate + 2 H(+). Its pathway is purine metabolism; AMP biosynthesis via de novo pathway; AMP from IMP: step 1/2. Its function is as follows. Plays an important role in the de novo pathway of purine nucleotide biosynthesis. Catalyzes the first committed step in the biosynthesis of AMP from IMP. This Methanococcus vannielii (strain ATCC 35089 / DSM 1224 / JCM 13029 / OCM 148 / SB) protein is Adenylosuccinate synthetase.